Reading from the N-terminus, the 66-residue chain is Large ribosomal subunit protein uL29 (66 aa).

It belongs to the universal ribosomal protein uL29 family.

The chain is Large ribosomal subunit protein uL29 from Borreliella burgdorferi (strain ZS7) (Borrelia burgdorferi).